A 743-amino-acid polypeptide reads, in one-letter code: Ribosome biogenesis protein BOP1 homolog (743 aa).

WD repeat units lie at residues 365–404, 575–615, 617–655, 659–701, and 712–743; these read GHTATVRSVSVSPNGQYLATGCDDHLVRVYEVQTGRLMKR, KFSE…RRFK, SGGVTTCLSIHPEGDNFLVGDTTSHTSWFDMDFSDKPYK, SHKG…DYNK, and KHQRSVYAVAWHPSLAWLFTSTEDGVVTAWTE.

This sequence belongs to the WD repeat BOP1/ERB1 family.

The protein localises to the nucleus. The protein resides in the nucleolus. It localises to the nucleoplasm. In terms of biological role, required for maturation of ribosomal RNAs and formation of the large ribosomal subunit. The sequence is that of Ribosome biogenesis protein BOP1 homolog from Leishmania braziliensis.